We begin with the raw amino-acid sequence, 83 residues long: Large ribosomal subunit protein bL31B (83 aa).

It belongs to the bacterial ribosomal protein bL31 family. Type B subfamily. In terms of assembly, part of the 50S ribosomal subunit.

Binds the 23S rRNA. The sequence is that of Large ribosomal subunit protein bL31B from Hydrogenovibrio crunogenus (strain DSM 25203 / XCL-2) (Thiomicrospira crunogena).